Reading from the N-terminus, the 1091-residue chain is MCRDEPDTMILTQIEAKEACDWLRVTGFPQYAQLYEDLLFPIDIALVKREHDFLDRDAIEALCRRLNTLNKCAVMKLEISPHRKRSEDSDEEEPCAISGKWTFQRDSKRWSRLEEFDVFSPKQDPIPGSPDNSRLQSATSRESMLTDLSEHQEVSSIRSLSSTSSSAPTHVPHSGEATTPRTNSVISVCSSSHFVGNEDSFSSLPSPKELSSFSFSMKGHEKNTKSKTRSLLKRMESLKLKGSHHSKHKAPSKLGLIISAPILQEGMDEEKLKQLNCVEISALNGNHINVPMVRKRSVSNSTQTSSSSSQSETSSAVSTPSPVTRTRSLSTCNKRVGMYLEGFDPFSQSAFNNVTEQNYKNRESYPEDTVFYIPEDHKPGTFPKALSNGSFCPSGNSSVNWRTGSFHGPGHLSLRRENSSDSPKELKRRNSSSSVSSRMSIYDNVPGSILYSSSGELADLENEDIFPELDDILYHVKGMQRIVNQWSEKFSDEGDSDSALDSVSPCPSSPKQIHLDVDHDRRTPSDLDSTGNSLNEPEEPTDIPERRDSGVGASLTRCNRHRLRWHSFQSSHRPSLNSVSLQINCQSVAQMNLLQKYSLLKLTALLEKYTPSNKHGFSWAVPKFMKRIKVPDYKDRSVFGVPLTVNVQRSGQPLPQSIQQAMRYLRNHCLDQVGLFRKSGVKSRIQALRQMNESAEDYVNYEGQSAYDVADMLKQYFRDLPEPLMTNKLSETFLQIYQYVPKDQRLQAIKAAIMLLPDENREVLQTLLYFLSHVTAAVKENQMTPTNLAVCLAPSLFHLNTLKRENSSPRVMQRKQSLGKPDQKDLNENLAATQGLAHMIAECKKLFQVPEEMSRCRNSYTEQELKPLTLEALGHLSNDQPADYRHFLQDCVDGLFKEVKEKFKGWVSYPTSEQAELSYKKVSEGPPLRLWRATIEVPAAPEEILKRLLKEQHLWDVDLLDSKVIEILDSQTEIYQYVQNSMAPHPARDYVVLRTWRTNLPRGACALLFTSVDHDRAPVAGVRVNVLLSRYLIEPCGSGKSKLTYMCRADLRGHMPEWYTKSFGHLCAAEVVKIRDSFSNQSTESKDTRSR.

Residues 11 to 78 form the SAM domain; it reads LTQIEAKEAC…LNKCAVMKLE (68 aa). 3 positions are modified to phosphoserine: S86, S89, and S129. 4 disordered regions span residues 120–181, 296–329, 402–439, and 491–552; these read SPKQ…TTPR, RSVS…TRSL, RTGS…SSRM, and SDEG…SGVG. The segment covering 130-143 has biased composition (polar residues); sequence PDNSRLQSATSRES. Low complexity-rich tracts occupy residues 155–166 and 298–324; these read SSIRSLSSTSSS and VSNS…SPVT. A focal adhesion-targeting (FAT) region spans residues 274–447; sequence QLNCVEISAL…RMSIYDNVPG (174 aa). Phosphoserine is present on S321. Residues 414–425 are compositionally biased toward basic and acidic residues; it reads LRRENSSDSPKE. Residues 499 to 511 show a composition bias toward polar residues; the sequence is ALDSVSPCPSSPK. The segment covering 513 to 525 has biased composition (basic and acidic residues); it reads IHLDVDHDRRTPS. Polar residues predominate over residues 526–535; sequence DLDSTGNSLN. Residues 614–636 form a polybasic cluster (PBR) region; it reads KHGFSWAVPKFMKRIKVPDYKDR. The region spanning 641 to 847 is the Rho-GAP domain; the sequence is VPLTVNVQRS…HMIAECKKLF (207 aa). The 208-residue stretch at 877–1084 folds into the START domain; it reads SNDQPADYRH…RDSFSNQSTE (208 aa).

As to quaternary structure, interacts with EF1A1, facilitates EF1A1 distribution to the membrane periphery and ruffles upon growth factor stimulation and suppresses cell migration. Interacts with tensin TNS1 (via N-terminus); the interaction is decreased by phosphorylation of TNS1. Interacts with TNS3 and PTEN; in resting cells, interacts with TNS3 (via C2 tensin-type domain) but, following growth factor stimulation, TNS3 and PTEN are phosphorylated which leads to weakened interaction with TNS3 and enhanced interaction with PTEN. Interacts (via C-terminus) with tensin TNS4 (via SH2 domain); the interaction is independent of tyrosine phosphorylation of DLC1.

It is found in the cytoplasm. Its subcellular location is the cell junction. The protein localises to the focal adhesion. The protein resides in the membrane. In terms of biological role, functions as a GTPase-activating protein for the small GTPases RHOA, RHOB, RHOC and CDC42, terminating their downstream signaling. This induces morphological changes and detachment through cytoskeletal reorganization, playing a critical role in biological processes such as cell migration and proliferation. Also functions in vivo as an activator of the phospholipase PLCD1. Active DLC1 increases cell migration velocity but reduces directionality. Required for growth factor-induced epithelial cell migration; in resting cells, interacts with TNS3 while PTEN interacts with the p85 regulatory subunit of the PI3K kinase complex but growth factor stimulation induces phosphorylation of TNS3 and PTEN, causing them to change their binding preference so that PTEN interacts with DLC1 and TNS3 interacts with p85. The PTEN-DLC1 complex translocates to the posterior of migrating cells to activate RHOA while the TNS3-p85 complex translocates to the leading edge of migrating cells to promote RAC1 activation. This Rattus norvegicus (Rat) protein is Rho GTPase-activating protein 7 (Dlc1).